The chain runs to 195 residues: Adenylate kinase (195 aa).

11-16 (GAGKGT) provides a ligand contact to ATP. Residues 31 to 60 (STGDIFRAAVRNQTPLGQQVQAYLDSGRLV) form an NMP region. AMP-binding positions include T32, R37, 58 to 60 (RLV), 86 to 89 (GFPR), and Q93. The tract at residues 127 to 137 (LRAEKESRKDD) is LID. R128 is a binding site for ATP. AMP-binding residues include R134 and R145. Q173 serves as a coordination point for ATP.

It belongs to the adenylate kinase family. In terms of assembly, monomer.

Its subcellular location is the cytoplasm. It catalyses the reaction AMP + ATP = 2 ADP. It participates in purine metabolism; AMP biosynthesis via salvage pathway; AMP from ADP: step 1/1. Catalyzes the reversible transfer of the terminal phosphate group between ATP and AMP. Plays an important role in cellular energy homeostasis and in adenine nucleotide metabolism. The protein is Adenylate kinase of Cyanothece sp. (strain PCC 7425 / ATCC 29141).